The primary structure comprises 331 residues: Thioredoxin-like fold domain-containing protein MRL7, chloroplastic (331 aa).

A chloroplast-targeting transit peptide spans 1–59 (MSFFAVACSAPRSSMLLTGLNSSFSDMHRSPLFVFPVTISSRSVKRFAAVSSDSVLDPE). Disordered regions lie at residues 52–105 (SDSV…ADAV) and 141–160 (GVDE…EDPD). The segment covering 142-160 (VDEEEEEEEEMVVEEEDPD) has biased composition (acidic residues).

As to quaternary structure, component of the transcriptionally active chromosome (TAC) complexes. Interacts with FSD2 and PRDA1. Interacts with FSD3 and CITRX/TRXZ. Binds to PTAC12/HMR/PAP5. As to expression, expressed in leaves, shoots, stems, cauline leaves, flower buds, flowers and siliques.

The protein localises to the plastid. The protein resides in the chloroplast. It localises to the chloroplast stroma. Its subcellular location is the chloroplast nucleoid. It is found in the nucleus. In terms of biological role, plays an essential role in early steps of chloroplast development. Involved in the regulation of plastid gene expression. May positively regulate plastid-encoded RNA polymerase (PEP) activity through binding to FSD3 and CITRX/TRXZ. Involved in redox-mediated regulation of chloroplast development. Possesses disulfide reductase activity in vitro. Required for the proper function of the plastid transcriptional machinery and protein accumulation in thylakoid membranes. May function as molecular chaperone to ensure proper organization of the nucleoids in chloroplasts. May mediate some aspect of thylakoid structure or function that controls non-photochemical quenching (NPQ). Participates in the early light signaling events of photobody biogenesis in chloroplasts. May mediate the degradation of two repressors of chloroplast biogenesis, PIF1 and PIF3 in nucleus. Collaboratively with PTAC12/HMR/PAP5, involved in the regulation of thermoresponsive responses via the stabilization of PIF4 in the daytime to initiate thermomorphogenesis. The sequence is that of Thioredoxin-like fold domain-containing protein MRL7, chloroplastic from Arabidopsis thaliana (Mouse-ear cress).